A 398-amino-acid polypeptide reads, in one-letter code: Flavohemoprotein (398 aa).

The Globin domain maps to 9–147 (QLTPAQIKII…LAKLLIDLEA (139 aa)). His93 contributes to the heme b binding site. Active-site charge relay system residues include Tyr103 and Glu146. A reductase region spans residues 155 to 398 (WRWFKDFKVT…KLEYFGPYDP (244 aa)). The FAD-binding FR-type domain maps to 156–263 (RWFKDFKVTR…APPAGNFVYD (108 aa)). FAD-binding positions include Tyr196 and 212–215 (REYS). 276-281 (GIGITP) contributes to the NADP(+) binding site. An FAD-binding site is contributed by 395–398 (PYDP).

It belongs to the globin family. Requires FAD as cofactor. Heme b serves as cofactor.

Its subcellular location is the cytoplasm. The enzyme catalyses 2 nitric oxide + NADPH + 2 O2 = 2 nitrate + NADP(+) + H(+). The catalysed reaction is 2 nitric oxide + NADH + 2 O2 = 2 nitrate + NAD(+) + H(+). With respect to regulation, inhibited by imidazoles. Nitric oxide dioxygenase involved in NO detoxification in an aerobic process, termed nitric oxide dioxygenase (NOD) reaction that utilizes O(2) and NAD(P)H to convert NO to nitrate, which protects the fungus from various noxious nitrogen compounds. Therefore, plays a central role in the inducible response to nitrosative stress. Plays a role in virulence since nitric oxide is generated by macrophages of the host immune system. This Candida albicans (strain SC5314 / ATCC MYA-2876) (Yeast) protein is Flavohemoprotein (YHB1).